A 671-amino-acid polypeptide reads, in one-letter code: Huntingtin-associated protein 1 (671 aa).

Disordered regions lie at residues 1–83 and 258–289; these read MRPK…ARRP and DSDE…EDLQ. Residues 20 to 29 show a composition bias toward low complexity; sequence PAALTCAPSP. The region spanning 106-461 is the HAP1 N-terminal domain; sequence RFVFQGPFGS…EEVKTLRQQP (356 aa). Residues 212-427 are a coiled coil; sequence QSLVKQNSVL…IQMQLQEESV (216 aa). Acidic residues predominate over residues 258-288; sequence DSDEEDEDEEEEEEEKEAEEEQEEEEAEEDL.

As to quaternary structure, self-associates. Interacts with HTT/huntingtin; enhanced by an expanded polyglutamine repeat within HTT. Interacts with DCTN1; decreased in presence of HTT with expanded polyglutamine repeat. Interacts with KLC2. Interacts with ITPR1 and APP. Interacts with AR; decreased by an expanded polyglutamine repeat within AR. Interacts with YWHAZ. Interacts with BDNF and SORT1; probably forming a complex involved in proBDNF trafficking, degradation and processing. Interacts with TBP, AHI1, HGS and KALRN. Interacts with KIF5A, KIF5B, KIF5C and GABRB3; indicative for an HAP1:KIF5 complex transporting a GABA(A) receptor as cargo. Interacts with ATXN3; in STBs with ATXN3 poly-Gln region with 27 repeats (normal population) and 79 repeats (spinocerebellar ataxia 3 (SCA3) patients) associating in the same strength. Interacts with NTRK2; HAP1 stabilizes association of NTRK2 with SORT1 preventing NTRK2 degradation. Interacts with CFAP263. As to expression, predominantly expressed in brain. Selectively expressed in neurons.

The protein resides in the cytoplasm. Its subcellular location is the cell projection. The protein localises to the axon. It localises to the presynapse. It is found in the cytoskeleton. The protein resides in the dendritic spine. Its subcellular location is the dendrite. The protein localises to the lysosome. It localises to the endoplasmic reticulum. It is found in the mitochondrion. The protein resides in the nucleus. Its subcellular location is the cytoplasmic vesicle. The protein localises to the autophagosome. It localises to the early endosome. It is found in the growth cone. The protein resides in the neuron projection. Its subcellular location is the secretory vesicle. The protein localises to the synaptic vesicle. Its function is as follows. Originally identified as neuronal protein that specifically associates with HTT/huntingtin and the binding is enhanced by an expanded polyglutamine repeat within HTT possibly affecting HAP1 interaction properties. Both HTT and HAP1 are involved in intracellular trafficking and HAP1 is proposed to link HTT to motor proteins and/or transport cargos. Seems to play a role in vesicular transport within neurons and axons such as from early endosomes to late endocytic compartments and to promote neurite outgrowth. The vesicular transport function via association with microtubule-dependent transporters can be attenuated by association with mutant HTT. Involved in the axonal transport of BDNF and its activity-dependent secretion; the function seems to involve HTT, DCTN1 and a complex with SORT1. Involved in APP trafficking and seems to facilitate APP anterograde transport and membrane insertion thereby possibly reducing processing into amyloid beta. Involved in delivery of gamma-aminobutyric acid (GABA(A)) receptors to synapses; the function is dependent on kinesin motor protein KIF5 and is disrupted by HTT with expanded polyglutamine repeat. Involved in regulation of autophagosome motility by promoting efficient retrograde axonal transport. Seems to be involved in regulation of membrane receptor recycling and degradation, and respective signal transduction, including GABA(A) receptors, tyrosine kinase receptors, EGFR, IP3 receptor and androgen receptor. Among others suggested to be involved in control of feeding behavior (involving hypothalamic GABA(A) receptors), cerebellar and brainstem development (involving AHI1 and NTRK1/TrkA), postnatal neurogenesis (involving hypothalamic NTRK2/TrkB), and ITPR1/InsP3R1-mediated Ca(2+) release (involving HTT and possibly the effect of mutant HTT). Via association with DCTN1/dynactin p150-glued and HTT/huntingtin involved in cytoplasmic retention of REST in neurons. May be involved in ciliogenesis. Involved in regulation of exocytosis. Seems to be involved in formation of cytoplasmic inclusion bodies (STBs). In case of anomalous expression of TBP, can sequester a subset of TBP into STBs; sequestration is enhanced by an expanded polyglutamine repeat within TBP. HAP1-containing STBs have been proposed to play a protective role against neurodegeneration in Huntigton disease (HD) and spinocerebellar ataxia 17 (SCA17). This Homo sapiens (Human) protein is Huntingtin-associated protein 1 (HAP1).